The sequence spans 262 residues: Tryptophan synthase alpha chain (262 aa).

Active-site proton acceptor residues include glutamate 52 and aspartate 63.

Belongs to the TrpA family. As to quaternary structure, tetramer of two alpha and two beta chains.

It carries out the reaction (1S,2R)-1-C-(indol-3-yl)glycerol 3-phosphate + L-serine = D-glyceraldehyde 3-phosphate + L-tryptophan + H2O. It participates in amino-acid biosynthesis; L-tryptophan biosynthesis; L-tryptophan from chorismate: step 5/5. Its function is as follows. The alpha subunit is responsible for the aldol cleavage of indoleglycerol phosphate to indole and glyceraldehyde 3-phosphate. This Mycobacteroides abscessus (strain ATCC 19977 / DSM 44196 / CCUG 20993 / CIP 104536 / JCM 13569 / NCTC 13031 / TMC 1543 / L948) (Mycobacterium abscessus) protein is Tryptophan synthase alpha chain.